Consider the following 475-residue polypeptide: UDP-glucosyltransferase UGT13248 (475 aa).

Positions 1-17 (METTVTAVSGTTSSSVG) are enriched in low complexity. The disordered stretch occupies residues 1 to 20 (METTVTAVSGTTSSSVGHGA). UDP-alpha-D-glucose-binding positions include histidine 38, serine 152, threonine 299, cysteine 352, 369 to 377 (HCGWNSTLE), and 393 to 394 (DQ).

Belongs to the UDP-glycosyltransferase family.

Involved in the detoxification of the Fusarium mycotoxin deoxynivalenol by the transfer of glucose from UDP-D-glucose to the hydroxyl group at C-3, forming deoxynivalenol-3-O-beta-D-glucoside. The chain is UDP-glucosyltransferase UGT13248 from Hordeum vulgare subsp. vulgare (Domesticated barley).